The sequence spans 495 residues: MTTSDVVRVRFCPSPTGTPHVGLIRTALFNWAYARHTGGTFVFRIEDTDSARDSEDSYLALLDALRWLGMDWDEGPEIGGPYGPYRQSQRLDIYTDVIERLLAAGEAYEAFSTAEEVEARHIAAGRNPKLGYDNYDRDLTEEQRAAFRAEGRRPVVRLRMPDTDLTWVDLVRGETTFPAGSVPDFALTRGNGEPLYPLVNPVDDALMKITHVLRGEDLLPSTPRQLALYGALIRIGVADTTPQFAHLPSVLGEGNKKLSKRDPQSNLFLHRDRGFIPEGLLNYLALLGWSIADDHDIFSLEEMVAAFDVADVNSSPARFDQKKADALNAEHIRLLDEAEFARRLGAYFATHGHRTGLDDAQFAEAARLVQTRIVVLGDAWELLKFLDDASFTLDEKSAAKELKAEAVPVLGAALEALRGVEAWDTAAIEEALKGALIDRLELKPRKAFGPVRVAATGSSVSPPLFESLELLGRDRSLARLQAGRDHAAAAAAPQG.

Residues 13 to 23 carry the 'HIGH' region motif; the sequence is PSPTGTPHVGL. The short motif at 257 to 261 is the 'KMSKS' region element; sequence KLSKR. Position 260 (K260) interacts with ATP.

It belongs to the class-I aminoacyl-tRNA synthetase family. Glutamate--tRNA ligase type 1 subfamily. As to quaternary structure, monomer.

It localises to the cytoplasm. It catalyses the reaction tRNA(Glu) + L-glutamate + ATP = L-glutamyl-tRNA(Glu) + AMP + diphosphate. Its function is as follows. Catalyzes the attachment of glutamate to tRNA(Glu) in a two-step reaction: glutamate is first activated by ATP to form Glu-AMP and then transferred to the acceptor end of tRNA(Glu). The chain is Glutamate--tRNA ligase from Mycolicibacterium vanbaalenii (strain DSM 7251 / JCM 13017 / BCRC 16820 / KCTC 9966 / NRRL B-24157 / PYR-1) (Mycobacterium vanbaalenii).